The following is a 248-amino-acid chain: 3-oxoacyl-[acyl-carrier-protein] reductase FabG (248 aa).

NADP(+) contacts are provided by residues 14–17 (GGSR), 64–65 (DV), and asparagine 91. Serine 143 is a binding site for substrate. The active-site Proton acceptor is tyrosine 156. NADP(+) contacts are provided by residues 156-160 (YAAAK) and isoleucine 189.

The protein belongs to the short-chain dehydrogenases/reductases (SDR) family. Homotetramer.

The catalysed reaction is a (3R)-hydroxyacyl-[ACP] + NADP(+) = a 3-oxoacyl-[ACP] + NADPH + H(+). It participates in lipid metabolism; fatty acid biosynthesis. Its function is as follows. Catalyzes the NADPH-dependent reduction of beta-ketoacyl-ACP substrates to beta-hydroxyacyl-ACP products, the first reductive step in the elongation cycle of fatty acid biosynthesis. The sequence is that of 3-oxoacyl-[acyl-carrier-protein] reductase FabG (fabG) from Chlamydia pneumoniae (Chlamydophila pneumoniae).